The sequence spans 335 residues: Acetyl-coenzyme A carboxylase carboxyl transferase subunit alpha (335 aa).

The region spanning 48–308 is the CoA carboxyltransferase C-terminal domain; sequence TLEKKVEALR…KGILIEELSA (261 aa).

This sequence belongs to the AccA family. Acetyl-CoA carboxylase is a heterohexamer composed of biotin carboxyl carrier protein (AccB), biotin carboxylase (AccC) and two subunits each of ACCase subunit alpha (AccA) and ACCase subunit beta (AccD).

Its subcellular location is the cytoplasm. It catalyses the reaction N(6)-carboxybiotinyl-L-lysyl-[protein] + acetyl-CoA = N(6)-biotinyl-L-lysyl-[protein] + malonyl-CoA. It participates in lipid metabolism; malonyl-CoA biosynthesis; malonyl-CoA from acetyl-CoA: step 1/1. In terms of biological role, component of the acetyl coenzyme A carboxylase (ACC) complex. First, biotin carboxylase catalyzes the carboxylation of biotin on its carrier protein (BCCP) and then the CO(2) group is transferred by the carboxyltransferase to acetyl-CoA to form malonyl-CoA. This is Acetyl-coenzyme A carboxylase carboxyl transferase subunit alpha from Chlorobium phaeovibrioides (strain DSM 265 / 1930) (Prosthecochloris vibrioformis (strain DSM 265)).